Reading from the N-terminus, the 182-residue chain is MGILFTRMFSSVFGNKEARILVLGLDNAGKTTILYRLQMGEVVSTIPTIGFNVETVQYNNIKFQVWDLGGQTSIRPYWRCYFPNTQAVIYVVDSSDTDRIGVAKEEFHAILEEDELKGAVVLIFANKQDLPGALDDAAVTEALELHKIKSRQWAIFKTCAVKGEGLFEGLDWLSNTLKSGSG.

Gly-2 carries N-myristoyl glycine lipidation. Residues 24-31 (GLDNAGKT), 67-71 (DLGGQ), and 126-129 (NKQD) contribute to the GTP site.

The protein belongs to the small GTPase superfamily. Arf family. In terms of assembly, interacts with GRIP; but preferentially when bound to GTP.

The protein localises to the golgi apparatus. Its function is as follows. GTP-binding protein involved in protein trafficking; may modulate vesicle budding and uncoating within the Golgi apparatus. The protein is ADP-ribosylation factor 3 (ARF3) of Arabidopsis thaliana (Mouse-ear cress).